The chain runs to 343 residues: Glucokinase (343 aa).

Residue 21–26 (ADVGGT) participates in ATP binding.

It belongs to the bacterial glucokinase family.

The protein resides in the cytoplasm. It carries out the reaction D-glucose + ATP = D-glucose 6-phosphate + ADP + H(+). The sequence is that of Glucokinase from Cupriavidus pinatubonensis (strain JMP 134 / LMG 1197) (Cupriavidus necator (strain JMP 134)).